A 137-amino-acid polypeptide reads, in one-letter code: Small ribosomal subunit protein uS9 (137 aa).

The disordered stretch occupies residues 103–137 (PPLKAEGYLTRDPRAKERKKYGLHKARKAPQYSKR). The segment covering 118–137 (KERKKYGLHKARKAPQYSKR) has biased composition (basic residues).

The protein belongs to the universal ribosomal protein uS9 family.

In Crocosphaera subtropica (strain ATCC 51142 / BH68) (Cyanothece sp. (strain ATCC 51142)), this protein is Small ribosomal subunit protein uS9.